The following is a 261-amino-acid chain: X-box-binding protein 1 (261 aa).

Residues 1-185 lie on the Cytoplasmic side of the membrane; it reads MVVVAPAQSP…VQAQLSPLQN (185 aa). A compositionally biased stretch (low complexity) spans 27-37; it reads TGGAPAGRALP. A disordered region spans residues 27-65; sequence TGGAPAGRALPVMVPGQQGASPEGASGVPPQARKRQRLT. Phosphoserine is present on residues serine 47 and serine 68. The 64-residue stretch at 70–133 folds into the bZIP domain; it reads EEKALRRKLK…HGLVVENQEL (64 aa). The interval 72 to 94 is basic motif; it reads KALRRKLKNRVAAQTARDRKKAR. A nuclear localization signal (NLS) region spans residues 76–92; sequence RKLKNRVAAQTARDRKK. The tract at residues 98–133 is leucine-zipper; the sequence is LEQQVVDLEEENQKLLLENQLLREKTHGLVVENQEL. Residues 186-203 form a helical; Signal-anchor for type II membrane protein membrane-spanning segment; sequence ISPWTLMALTLQTLSLTS. The Lumenal segment spans residues 204–261; the sequence is CWAFCSTWTQSCSSDVLPQSLPAWSSSQKWTQKDPVPYRPPLLHPWGRHQPSWKPLMN.

The protein belongs to the bZIP family. Isoform 1 interacts with HM13. Isoform 1 interacts with RNF139; the interaction induces ubiquitination and degradation of isoform 1. Isoform 1 interacts (via luminal domain) with DERL1; the interaction obviates the need for ectodomain shedding prior HM13/SPP-mediated XBP1 isoform 1 cleavage. Isoform 1 interacts with HDAC3 and AKT1; the interactions occur in endothelial cell (EC) under disturbed flow. Isoform 1 interacts with the oncoprotein FOS. Interacts with SIRT1. Isoform 1 is ubiquitinated, leading to proteasome-mediated degradation in response to ER stress. In terms of processing, X-box-binding protein 1, cytoplasmic form and luminal form are produced by intramembrane proteolytic cleavage of ER membrane-anchored isoform 1 triggered by HM13/SPP in a DERL1-RNF139-dependent and VCP/p97-independent manner. X-box-binding protein 1, luminal form is ubiquitinated leading to proteasomal degradation. Post-translationally, acetylated by EP300; acetylation positively regulates the transcriptional activity of XBP1. Deacetylated by SIRT1; deacetylation negatively regulates the transcriptional activity of XBP1.

Its subcellular location is the nucleus. It localises to the endoplasmic reticulum. The protein localises to the cytoplasm. The protein resides in the endoplasmic reticulum membrane. It is found in the membrane. In terms of biological role, functions as a transcription factor during endoplasmic reticulum (ER) stress by regulating the unfolded protein response (UPR). Required for cardiac myogenesis and hepatogenesis during embryonic development, and the development of secretory tissues such as exocrine pancreas and salivary gland. Involved in terminal differentiation of B lymphocytes to plasma cells and production of immunoglobulins. Modulates the cellular response to ER stress in a PIK3R-dependent manner. Binds to the cis-acting X box present in the promoter regions of major histocompatibility complex class II genes. Involved in VEGF-induced endothelial cell (EC) proliferation and retinal blood vessel formation during embryonic development but also for angiogenesis in adult tissues under ischemic conditions. Functions also as a major regulator of the UPR in obesity-induced insulin resistance and type 2 diabetes for the management of obesity and diabetes prevention. Functionally, acts as a weak transcriptional factor. Together with HDAC3, contributes to the activation of NFE2L2-mediated HMOX1 transcription factor gene expression in a PI(3)K/mTORC2/Akt-dependent signaling pathway leading to EC survival under disturbed flow/oxidative stress. Binds to the ER stress response element (ERSE) upon ER stress. Binds to the consensus 5'-GATGACGTG[TG]N(3)[AT]T-3' sequence related to cAMP responsive element (CRE)-like sequences. Associates preferentially to the HDAC3 gene promoter region in a static flow-dependent manner. Binds to the CDH5/VE-cadherin gene promoter region. The protein is X-box-binding protein 1 of Bos taurus (Bovine).